The sequence spans 176 residues: DELTA-stichotoxin-She4a (176 aa).

Positions 2–11 are plays an important role in the hemolytic activity; that stretch reads ELAGTIIDGA. Positions 10 to 29 are N-terminal region; it reads GASLTFEVLDKVLGELGKVS. Ser-53, Val-86, Ser-104, Pro-106, Tyr-132, Tyr-136, and Tyr-137 together coordinate phosphocholine. The interval 104–119 is trp-rich region, which is important for the binding to lipid membrane; the sequence is SVPFDYNWYSNWWDVK. The Cell attachment site signature appears at 142–144; the sequence is RGD.

In terms of assembly, octamer or nonamer in membranes. Monomer in the soluble state.

Its subcellular location is the secreted. It localises to the nematocyst. It is found in the target cell membrane. Functionally, pore-forming protein that forms cations-selective hydrophilic pores of around 1 nm and causes cardiac stimulation and cytolysis. Pore formation is a multi-step process that involves specific recognition of membrane sphingomyelin (but neither cholesterol nor phosphatidylcholine) using aromatic rich region and adjacent phosphocholine (POC) binding site, firm binding to the membrane (mainly driven by hydrophobic interactions) accompanied by the transfer of the N-terminal region to the lipid-water interface and finally pore formation after oligomerization of monomers. Cytolytic effects include red blood cells hemolysis, platelet aggregation and lysis, cytotoxic and cytostatic effects on fibroblasts. Lethality in mammals has been ascribed to severe vasospasm of coronary vessels, cardiac arrhythmia, and inotropic effects. This chain is DELTA-stichotoxin-She4a, found in Stichodactyla helianthus (Sun anemone).